A 1033-amino-acid chain; its full sequence is Potassium-transporting ATPase alpha chain 1 (1033 aa).

Over 1-96 the chain is Cytoplasmic; the sequence is MGKENYELYS…NALRPPRGTP (96 aa). A phosphotyrosine mark is found at Tyr6 and Tyr9. A disordered region spans residues 14 to 39; that stretch reads GTGPGGDMAAKMSKKKAGGGGGKKKE. Over residues 25 to 38 the composition is skewed to basic residues; the sequence is MSKKKAGGGGGKKK. Ser26 bears the Phosphoserine mark. The chain crosses the membrane as a helical span at residues 97 to 117; that stretch reads EYVKFARQLAGGLQCLMWVAA. At 118-140 the chain is on the lumenal side; that stretch reads AICLIAFAIQASEGDLTTDDNLY. The chain crosses the membrane as a helical span at residues 141-161; the sequence is LALALIAVVVVTGCFGYYQEF. Residues 162–297 are Cytoplasmic-facing; the sequence is KSTNIIASFK…NEKTPIAIEI (136 aa). The chain crosses the membrane as a helical span at residues 298–317; sequence EHFVDIIAGLAILFGATFFV. The Lumenal portion of the chain corresponds to 318 to 329; sequence VAMCIGYTFLRA. A helical membrane pass occupies residues 330–347; sequence MVFFMAIVVAYVPEGLLA. 4 residues coordinate K(+): Val338, Ala339, Val341, and Glu343. Over 348–781 the chain is Cytoplasmic; the sequence is TVTVCLSLTA…EQGRLIFDNL (434 aa). Asp385 functions as the 4-aspartylphosphate intermediate in the catalytic mechanism. Mg(2+) contacts are provided by Asp385 and Thr387. 2 positions are modified to phosphoserine: Ser461 and Ser599. Asp726 and Asp730 together coordinate Mg(2+). A helical membrane pass occupies residues 782–801; it reads KKSIAYTLTKNIPELTPYLI. Glu795 lines the K(+) pocket. At 802-811 the chain is on the lumenal side; that stretch reads YITVSVPLPL. A helical membrane pass occupies residues 812–832; sequence GCITILFIELCTDIFPSVSLA. A K(+)-binding site is contributed by Glu820. Over 833 to 852 the chain is Cytoplasmic; that stretch reads YEKAESDIMHLRPRNPRRDR. Ser838 carries the post-translational modification Phosphoserine. A helical membrane pass occupies residues 853–875; sequence LVNEPLAAYSYFQIGAIQSFAGF. The Lumenal segment spans residues 876 to 927; it reads ADYFTAMAQEGWFPLLCVGLRPQWEDHHLQDLQDSYGQEWTFGQRLYQQYTC. Residues 928 to 947 traverse the membrane as a helical segment; sequence YTVFFISIEMCQIADVLIRK. The Cytoplasmic portion of the chain corresponds to 948 to 961; it reads TRRLSAFQQGFFRN. Ser952 carries the phosphoserine; by PKA modification. The helical transmembrane segment at 962-980 threads the bilayer; sequence RILVIAIVFQVCIGCFLCY. Residues 981–995 are Lumenal-facing; that stretch reads CPGMPNIFNFMPIRF. Residues 996–1016 traverse the membrane as a helical segment; sequence QWWLVPMPFGLLIFVYDEIRK. Over 1017-1033 the chain is Cytoplasmic; sequence LGVRCCPGSWWDQELYY.

This sequence belongs to the cation transport ATPase (P-type) (TC 3.A.3) family. Type IIC subfamily. The gastric H(+)/K(+) ATPase pump is composed of the catalytic alpha subunit ATP4A and the regulatory beta subunit ATP4B. Interacts (via the P-domain) with ATP4B (via N-terminus); this interaction stabilizes the lumenal-open E2 conformation state and prevents the reverse reaction of the transport cycle.

The protein localises to the apical cell membrane. The enzyme catalyses K(+)(out) + ATP + H2O + H(+)(in) = K(+)(in) + ADP + phosphate + 2 H(+)(out). In terms of biological role, the catalytic subunit of the gastric H(+)/K(+) ATPase pump which transports H(+) ions in exchange for K(+) ions across the apical membrane of parietal cells. Uses ATP as an energy source to pump H(+) ions to the gastric lumen while transporting K(+) ion from the lumen into the cell. Remarkably generates a million-fold proton gradient across the gastric parietal cell membrane, acidifying the gastric juice down to pH 1. Within a transport cycle, the transfer of a H(+) ion across the membrane is coupled to ATP hydrolysis and is associated with a transient phosphorylation that shifts the pump conformation from inward-facing (E1) to outward-facing state (E2). The release of the H(+) ion in the stomach lumen is followed by binding of K(+) ion converting the pump conformation back to the E1 state. The protein is Potassium-transporting ATPase alpha chain 1 (Atp4a) of Rattus norvegicus (Rat).